Here is a 468-residue protein sequence, read N- to C-terminus: Cysteine--tRNA ligase (468 aa).

Residue Cys-29 participates in Zn(2+) binding. The 'HIGH' region signature appears at 31 to 41; sequence PTVYNYIHIGN. Cys-209, His-234, and Glu-238 together coordinate Zn(2+). Positions 266 to 270 match the 'KMSKS' region motif; it reads KMSKS. Lys-269 contributes to the ATP binding site. The residue at position 270 (Ser-270) is a Phosphoserine.

It belongs to the class-I aminoacyl-tRNA synthetase family. In terms of assembly, monomer. The cofactor is Zn(2+).

The protein resides in the cytoplasm. The enzyme catalyses tRNA(Cys) + L-cysteine + ATP = L-cysteinyl-tRNA(Cys) + AMP + diphosphate. This is Cysteine--tRNA ligase from Oceanobacillus iheyensis (strain DSM 14371 / CIP 107618 / JCM 11309 / KCTC 3954 / HTE831).